A 365-amino-acid polypeptide reads, in one-letter code: 4-hydroxy-3-methylbut-2-en-1-yl diphosphate synthase (flavodoxin) (365 aa).

[4Fe-4S] cluster-binding residues include cysteine 265, cysteine 268, cysteine 300, and glutamate 307.

This sequence belongs to the IspG family. It depends on [4Fe-4S] cluster as a cofactor.

It carries out the reaction (2E)-4-hydroxy-3-methylbut-2-enyl diphosphate + oxidized [flavodoxin] + H2O + 2 H(+) = 2-C-methyl-D-erythritol 2,4-cyclic diphosphate + reduced [flavodoxin]. Its pathway is isoprenoid biosynthesis; isopentenyl diphosphate biosynthesis via DXP pathway; isopentenyl diphosphate from 1-deoxy-D-xylulose 5-phosphate: step 5/6. In terms of biological role, converts 2C-methyl-D-erythritol 2,4-cyclodiphosphate (ME-2,4cPP) into 1-hydroxy-2-methyl-2-(E)-butenyl 4-diphosphate. The chain is 4-hydroxy-3-methylbut-2-en-1-yl diphosphate synthase (flavodoxin) from Bacillus mycoides (strain KBAB4) (Bacillus weihenstephanensis).